An 85-amino-acid polypeptide reads, in one-letter code: Putative membrane protein insertion efficiency factor (85 aa).

The protein belongs to the UPF0161 family.

It localises to the cell inner membrane. Could be involved in insertion of integral membrane proteins into the membrane. The sequence is that of Putative membrane protein insertion efficiency factor from Tolumonas auensis (strain DSM 9187 / NBRC 110442 / TA 4).